The following is a 363-amino-acid chain: Pyrimidine monooxygenase RutA (363 aa).

FMN-binding positions include 49–50 (IK), Asn-115, Glu-124, 140–141 (RY), and Ser-190.

Belongs to the NtaA/SnaA/DszA monooxygenase family. RutA subfamily.

The enzyme catalyses uracil + FMNH2 + NADH + O2 = (Z)-3-ureidoacrylate + FMN + NAD(+) + H2O + H(+). The catalysed reaction is thymine + FMNH2 + NADH + O2 = (Z)-2-methylureidoacrylate + FMN + NAD(+) + H2O + H(+). Functionally, catalyzes the pyrimidine ring opening between N-3 and C-4 by an unusual flavin hydroperoxide-catalyzed mechanism, adding oxygen atoms in the process to yield ureidoacrylate peracid, that immediately reacts with FMN forming ureidoacrylate and FMN-N(5)-oxide. The FMN-N(5)-oxide reacts spontaneously with NADH to produce FMN. Requires the flavin reductase RutF to regenerate FMN in vivo. This Klebsiella variicola (strain At-22) protein is Pyrimidine monooxygenase RutA.